Here is a 492-residue protein sequence, read N- to C-terminus: DEAD-box ATP-dependent RNA helicase RhpA (492 aa).

The Q motif signature appears at 20 to 48 (PSFNDLGLKESVLKSVYEAGFTSPSPIQE). Residues 51–220 (IPAVLQGRDV…DKILENPIKI (170 aa)) form the Helicase ATP-binding domain. Position 64–71 (64–71 (AQTGTGKT)) interacts with ATP. A DEAD box motif is present at residues 168–171 (DESD). The 163-residue stretch at 231–393 (DITQRFYVIN…EIPTINENQI (163 aa)) folds into the Helicase C-terminal domain. Positions 445 to 492 (AIQNPKEKTPKPSNKKTPQHERARSFKKGQHRDRHPKTNHYSKKPKRR) are disordered. A compositionally biased stretch (basic residues) spans 469-492 (SFKKGQHRDRHPKTNHYSKKPKRR).

The protein belongs to the DEAD box helicase family. As to quaternary structure, homodimer. Interacts with RNase J (rnj), might be a member of a minimal RNA degradosome complex.

The protein localises to the cytoplasm. It carries out the reaction ATP + H2O = ADP + phosphate + H(+). Functionally, DEAD-box RNA helicase probably involved in RNA degradation. Unwinds dsRNA in both 5'- and 3'-directions. The chain is DEAD-box ATP-dependent RNA helicase RhpA (rhpA) from Helicobacter pylori (strain ATCC 700392 / 26695) (Campylobacter pylori).